We begin with the raw amino-acid sequence, 298 residues long: N-acetylmuramic acid 6-phosphate etherase (298 aa).

An SIS domain is found at 55-218 (ITESLRRGGR…STASMVRLGK (164 aa)). Glu-83 acts as the Proton donor in catalysis. Glu-114 is a catalytic residue.

Belongs to the GCKR-like family. MurNAc-6-P etherase subfamily. As to quaternary structure, homodimer.

The catalysed reaction is N-acetyl-D-muramate 6-phosphate + H2O = N-acetyl-D-glucosamine 6-phosphate + (R)-lactate. It functions in the pathway amino-sugar metabolism; N-acetylmuramate degradation. Its function is as follows. Specifically catalyzes the cleavage of the D-lactyl ether substituent of MurNAc 6-phosphate, producing GlcNAc 6-phosphate and D-lactate. The protein is N-acetylmuramic acid 6-phosphate etherase of Mycolicibacterium smegmatis (strain ATCC 700084 / mc(2)155) (Mycobacterium smegmatis).